A 481-amino-acid polypeptide reads, in one-letter code: PRAME family member 22 (481 aa).

One copy of the LRR 1; degenerate repeat lies at 99-126 (RWKLQVLELRDVDENFWTIWSGARPLSC). The stretch at 181 to 205 (HLCCTKVVNYSMSILNFRNILETVY) is one LRR 2; degenerate repeat. The stretch at 206-232 (PDSIQVLEIWNMCWPCMIVEFSRYLSQ) is one LRR 3; degenerate repeat. An LRR 4; degenerate repeat occupies 233–267 (MRNLRKLFISDGCRYLLSSDSQEQLVAEFSSVLLR). LRR repeat units follow at residues 268–293 (LEYL…IRCL), 294–325 (RSPL…SQLK), 326–344 (QLNL…PLRA), 350–377 (AATL…ALSC), and 378–402 (CSNL…LLRH).

It belongs to the PRAME family.

The chain is PRAME family member 22 from Homo sapiens (Human).